Consider the following 286-residue polypeptide: Pantothenate synthetase (286 aa).

30 to 37 (MGYFHEGH) contacts ATP. Catalysis depends on histidine 37, which acts as the Proton donor. A (R)-pantoate-binding site is contributed by glutamine 61. Glutamine 61 is a beta-alanine binding site. 147–150 (GKKD) provides a ligand contact to ATP. Glutamine 153 provides a ligand contact to (R)-pantoate. 184–187 (MSSR) provides a ligand contact to ATP.

The protein belongs to the pantothenate synthetase family. Homodimer.

The protein resides in the cytoplasm. It carries out the reaction (R)-pantoate + beta-alanine + ATP = (R)-pantothenate + AMP + diphosphate + H(+). The protein operates within cofactor biosynthesis; (R)-pantothenate biosynthesis; (R)-pantothenate from (R)-pantoate and beta-alanine: step 1/1. Functionally, catalyzes the condensation of pantoate with beta-alanine in an ATP-dependent reaction via a pantoyl-adenylate intermediate. The polypeptide is Pantothenate synthetase (Syntrophus aciditrophicus (strain SB)).